A 100-amino-acid polypeptide reads, in one-letter code: Urease subunit gamma (100 aa).

It belongs to the urease gamma subunit family. In terms of assembly, heterotrimer of UreA (gamma), UreB (beta) and UreC (alpha) subunits. Three heterotrimers associate to form the active enzyme.

Its subcellular location is the cytoplasm. The enzyme catalyses urea + 2 H2O + H(+) = hydrogencarbonate + 2 NH4(+). The protein operates within nitrogen metabolism; urea degradation; CO(2) and NH(3) from urea (urease route): step 1/1. In Saccharopolyspora erythraea (strain ATCC 11635 / DSM 40517 / JCM 4748 / NBRC 13426 / NCIMB 8594 / NRRL 2338), this protein is Urease subunit gamma.